The sequence spans 185 residues: MNWRSEHIWVELLKGSRKRGNFFWACILFLGSLGFLSVGISSYLGKNIISILPSQEILFFPQGVVMSFYGIAGLFISSYLCCTILWNVGSDYDRFDRKEGIVCIFRWEFPGIKRRVFLRFLMRDIQSIRIQVKEGLYPRRILYMEIRGQGIIPLTRTDDQFFTPREIEQKAAELAYFLRVPIEVF.

2 helical membrane passes run N21 to Y43 and F68 to S90.

The protein belongs to the Ycf4 family.

Its subcellular location is the plastid. The protein resides in the chloroplast thylakoid membrane. Functionally, seems to be required for the assembly of the photosystem I complex. This is Photosystem I assembly protein Ycf4 from Aegilops tauschii (Tausch's goatgrass).